Reading from the N-terminus, the 183-residue chain is U3 small nucleolar ribonucleoprotein protein imp3 (183 aa).

Residues 108 to 174 (RRLPVVMRNI…IKKHVMDYNN (67 aa)) form the S4 RNA-binding domain.

It belongs to the universal ribosomal protein uS4 family. In terms of assembly, component of a heterotrimeric complex containing imp3, imp4 and mpp10.

The protein localises to the nucleus. The protein resides in the nucleolus. Functionally, component of the U3 small nucleolar ribonucleoprotein. Required for the early cleavages at sites A0, A1 and A2 during 18S ribosomal pre-RNA processing. The polypeptide is U3 small nucleolar ribonucleoprotein protein imp3 (Caenorhabditis elegans).